A 520-amino-acid polypeptide reads, in one-letter code: Cytochrome b5 reductase 4 (520 aa).

N-acetylmethionine is present on Met1. The segment at 1 to 27 (MLNVPSQAFPAPGSQQRVASQGRSKVP) is disordered. The segment covering 13–23 (GSQQRVASQGR) has biased composition (polar residues). One can recognise a Cytochrome b5 heme-binding domain in the interval 54 to 130 (LIEVTEEELK…LKECLVGRMA (77 aa)). His89 and His112 together coordinate heme. The region spanning 164 to 255 (PSSPSYDWFQ…KETVSWKCLG (92 aa)) is the CS domain. Residues 272–384 (LYYRQCQLIS…SGPEGNFKVS (113 aa)) enclose the FAD-binding FR-type domain. FAD contacts are provided by residues 364-379 (DRLQIGDFVSVSGPEG) and 391-423 (DLFLLAAGTGFTPMVTVLNHALTHMSSLRKVKL).

Belongs to the flavoprotein pyridine nucleotide cytochrome reductase family. The cofactor is FAD. In terms of tissue distribution, isoform 2 is expressed in testis, brain, skeletal muscle and in the male germline.

The protein resides in the endoplasmic reticulum. It catalyses the reaction 2 Fe(III)-[cytochrome b5] + NADH = 2 Fe(II)-[cytochrome b5] + NAD(+) + H(+). In terms of biological role, NADH-cytochrome b5 reductase involved in endoplasmic reticulum stress response pathway. Plays a critical role in protecting pancreatic beta-cells against oxidant stress, possibly by protecting the cell from excess buildup of reactive oxygen species (ROS). This is Cytochrome b5 reductase 4 (Cyb5r4) from Rattus norvegicus (Rat).